The primary structure comprises 77 residues: Protein IDA (77 aa).

A signal peptide spans 1–26 (MAPCRTMMVLLCFVLFLAASSSCVAA). The RLK5-binding stretch occupies residues 56 to 69 (GVPIPPSAPSKRHN).

Interaction with RLK5. Expressed specifically in the floral abscission zone.

The protein localises to the secreted. It localises to the extracellular space. Functionally, involved in an ethylene-independent separation step of floral abscission. Promotes abscission zone (AZ) cells rounding. May act with RLK5 and HSL2 as ligand-receptor pairs. The protein is Protein IDA of Arabidopsis thaliana (Mouse-ear cress).